The following is a 436-amino-acid chain: 3-ketoacyl-CoA thiolase (436 aa).

Residue C99 is the Acyl-thioester intermediate of the active site. Residues H392 and C422 each act as proton acceptor in the active site.

It belongs to the thiolase-like superfamily. Thiolase family. As to quaternary structure, heterotetramer of two alpha chains (FadJ) and two beta chains (FadI).

The protein resides in the cytoplasm. It carries out the reaction an acyl-CoA + acetyl-CoA = a 3-oxoacyl-CoA + CoA. It participates in lipid metabolism; fatty acid beta-oxidation. Functionally, catalyzes the final step of fatty acid oxidation in which acetyl-CoA is released and the CoA ester of a fatty acid two carbons shorter is formed. The sequence is that of 3-ketoacyl-CoA thiolase from Escherichia coli O9:H4 (strain HS).